The chain runs to 541 residues: Protein yellow (541 aa).

An N-terminal signal peptide occupies residues 1 to 21 (MFQDKGWILVTLITLVTPSWA). N-linked (GlcNAc...) asparagine glycans are attached at residues Asn144 and Asn215. Positions 443–463 (QKPQTSWASSPPPPSRTYLPA) are disordered.

Belongs to the major royal jelly protein family.

Its subcellular location is the secreted. In terms of biological role, controls the pigmentation pattern of the adult cuticle and larval mouth parts. The chain is Protein yellow (y) from Drosophila mauritiana (Fruit fly).